The sequence spans 144 residues: MMYRNNLLISFDFGTKNIGVAIGQMKTNTSKPLESVSYVKGVPNWGKINNIILLWEPKYIIVGLPLNMDGSYQTSTIKAKKFAKQLRNKFFMPVMMHDERLTTIEAKSVLFKKYGYKGLKKKLIDSESAVIILDSWMNSIYFKK.

This sequence belongs to the YqgF nuclease family.

The protein resides in the cytoplasm. Functionally, could be a nuclease involved in processing of the 5'-end of pre-16S rRNA. This is Putative pre-16S rRNA nuclease from Wigglesworthia glossinidia brevipalpis.